A 64-amino-acid polypeptide reads, in one-letter code: Leader peptide SpeFL (64 aa).

The short motif at histidine 32–histidine 38 is the Ornithine recognition loop element. Residue arginine 35 coordinates L-ornithine.

This sequence belongs to the speF operon leader peptide family. Binds ornithine in stalled 70S ribosomes, blocking the upper two-thirds of the exit tunnel. Contacts 23S rRNA and ribosomal proteins L4 and L22.

Functionally, a small protein (arrest peptide) encoded upstream of inducible ornithine carboxylase gene (speF) that controls expression of downstream genes (usually speF and potE) by transcriptional and translational attenuation. The sequence is that of Leader peptide SpeFL from Haemophilus influenzae (strain ATCC 51907 / DSM 11121 / KW20 / Rd).